The following is a 140-amino-acid chain: Holo-[acyl-carrier-protein] synthase (140 aa).

2 residues coordinate Mg(2+): D7 and E58.

The protein belongs to the P-Pant transferase superfamily. AcpS family. The cofactor is Mg(2+).

It localises to the cytoplasm. The catalysed reaction is apo-[ACP] + CoA = holo-[ACP] + adenosine 3',5'-bisphosphate + H(+). Transfers the 4'-phosphopantetheine moiety from coenzyme A to a Ser of acyl-carrier-protein. In Chloroflexus aggregans (strain MD-66 / DSM 9485), this protein is Holo-[acyl-carrier-protein] synthase.